The primary structure comprises 255 residues: Type III pantothenate kinase (255 aa).

6-13 (DVGNTNIV) is a binding site for ATP. Substrate is bound by residues tyrosine 100 and 107–110 (GADR). Catalysis depends on aspartate 109, which acts as the Proton acceptor. Aspartate 129 contacts K(+). Residue threonine 132 coordinates ATP. Threonine 184 serves as a coordination point for substrate.

Belongs to the type III pantothenate kinase family. As to quaternary structure, homodimer. It depends on NH4(+) as a cofactor. K(+) is required as a cofactor.

The protein localises to the cytoplasm. The enzyme catalyses (R)-pantothenate + ATP = (R)-4'-phosphopantothenate + ADP + H(+). The protein operates within cofactor biosynthesis; coenzyme A biosynthesis; CoA from (R)-pantothenate: step 1/5. Its function is as follows. Catalyzes the phosphorylation of pantothenate (Pan), the first step in CoA biosynthesis. This is Type III pantothenate kinase from Caldanaerobacter subterraneus subsp. tengcongensis (strain DSM 15242 / JCM 11007 / NBRC 100824 / MB4) (Thermoanaerobacter tengcongensis).